We begin with the raw amino-acid sequence, 192 residues long: Protein FAM210B, mitochondrial (192 aa).

Residues 1–58 (MAGLLALLGPAGRVGARVRPRATWLLGATAPCAPPPLALALLPPRLDARLLRTARGDC) constitute a mitochondrion transit peptide. The interval 57 to 80 (DCRGHQDPSQATGTTGSSVSCTEE) is disordered. Residues 63-77 (DPSQATGTTGSSVSC) show a composition bias toward polar residues. In terms of domain architecture, DUF1279 spans 80–191 (EKKQSKSQQL…VGFFKPPAAK (112 aa)). Transmembrane regions (helical) follow at residues 99-119 (VGVS…YMVV) and 150-170 (FVVA…ITLV).

The protein belongs to the FAM210 family. In terms of tissue distribution, expressed in late erythroblast differentiation stages. Underexpressed in ovarian cancer epithelia cells compared with normal human ovarian surface epithelia.

The protein localises to the mitochondrion. Its subcellular location is the mitochondrion outer membrane. Its function is as follows. Plays a role in erythroid differentiation. Involved in cell proliferation and tumor cell growth suppression. Involved in the metabolic reprogramming of cancer cells in a PDK4-dependent manner. This is Protein FAM210B, mitochondrial from Homo sapiens (Human).